A 130-amino-acid chain; its full sequence is Histone H2B.1 (130 aa).

The segment covering 1 to 19 (MAPKAEKKPASKAPAEKKP) has biased composition (basic and acidic residues). The segment at 1–39 (MAPKAEKKPASKAPAEKKPAAKKTASATGTKKRSKTRKE) is disordered. N6-acetyllysine; alternate is present on residues K7 and K8. Glycyl lysine isopeptide (Lys-Gly) (interchain with G-Cter in SUMO); alternate cross-links involve residues K7 and K8. A Phosphoserine modification is found at S11. K12 is modified (N6-acetyllysine). Position 17 is an N6-acetyllysine; alternate (K17). A Glycyl lysine isopeptide (Lys-Gly) (interchain with G-Cter in SUMO); alternate cross-link involves residue K17. Residue K18 forms a Glycyl lysine isopeptide (Lys-Gly) (interchain with G-Cter in SUMO) linkage. K124 is covalently cross-linked (Glycyl lysine isopeptide (Lys-Gly) (interchain with G-Cter in ubiquitin)).

The protein belongs to the histone H2B family. As to quaternary structure, the nucleosome is a histone octamer containing two molecules each of H2A, H2B, H3 and H4 assembled in one H3-H4 heterotetramer and two H2A-H2B heterodimers. The octamer wraps approximately 147 bp of DNA. In terms of processing, monoubiquitinated by the UBC2-BRE1 complex to form H2BK123ub1. H2BK123ub1 gives a specific tag for epigenetic transcriptional activation and is also prerequisite for H3K4me and H3K79me formation. H2BK123ub1 also modulates the formation of double-strand breaks during meiosis and is a prerequisite for DNA-damage checkpoint activation. Phosphorylated by STE20 to form H2BS10ph during progression through meiotic prophase. May be correlated with chromosome condensation. Post-translationally, acetylated by GCN5 to form H2BK11ac and H2BK16ac. H2BK16ac can also be formed by ESA1. Acetylation of N-terminal lysines and particularly formation of H2BK11acK16ac has a positive effect on transcription. In terms of processing, sumoylation to form H2BK6su or H2BK7su, and probably also H2BK16su or H2BK17su, occurs preferentially near the telomeres and represses gene transcription.

It is found in the nucleus. The protein resides in the chromosome. In terms of biological role, core component of nucleosome. Nucleosomes wrap and compact DNA into chromatin, limiting DNA accessibility to the cellular machineries which require DNA as a template. Histones thereby play a central role in transcription regulation, DNA repair, DNA replication and chromosomal stability. DNA accessibility is regulated via a complex set of post-translational modifications of histones, also called histone code, and nucleosome remodeling. The chain is Histone H2B.1 (HTB1) from Debaryomyces hansenii (strain ATCC 36239 / CBS 767 / BCRC 21394 / JCM 1990 / NBRC 0083 / IGC 2968) (Yeast).